Reading from the N-terminus, the 474-residue chain is tRNA-2-methylthio-N(6)-dimethylallyladenosine synthase (474 aa).

The MTTase N-terminal domain maps to 3-120; that stretch reads KKLHIKTWGC…LPEMINHVQG (118 aa). C12, C49, C83, C157, C161, and C164 together coordinate [4Fe-4S] cluster. In terms of domain architecture, Radical SAM core spans 143–375; the sequence is RAEGPTAFVS…QQRITQQAME (233 aa). In terms of domain architecture, TRAM spans 378-441; the sequence is REMVGTVQRI…ASSLRGILLR (64 aa).

It belongs to the methylthiotransferase family. MiaB subfamily. Monomer. It depends on [4Fe-4S] cluster as a cofactor.

It localises to the cytoplasm. The enzyme catalyses N(6)-dimethylallyladenosine(37) in tRNA + (sulfur carrier)-SH + AH2 + 2 S-adenosyl-L-methionine = 2-methylsulfanyl-N(6)-dimethylallyladenosine(37) in tRNA + (sulfur carrier)-H + 5'-deoxyadenosine + L-methionine + A + S-adenosyl-L-homocysteine + 2 H(+). In terms of biological role, catalyzes the methylthiolation of N6-(dimethylallyl)adenosine (i(6)A), leading to the formation of 2-methylthio-N6-(dimethylallyl)adenosine (ms(2)i(6)A) at position 37 in tRNAs that read codons beginning with uridine. This is tRNA-2-methylthio-N(6)-dimethylallyladenosine synthase from Yersinia enterocolitica serotype O:8 / biotype 1B (strain NCTC 13174 / 8081).